Consider the following 98-residue polypeptide: U-megalopygitoxin(1)-Mo1 (98 aa).

Residues 1 to 17 (MYRETFVFCVLLAVVSA) form the signal peptide.

Belongs to the caterpillar 1 family. Contains 4 disulfide bonds. As to expression, expressed by the venom apparatus.

It localises to the secreted. Its function is as follows. Probable toxin. This chain is U-megalopygitoxin(1)-Mo1, found in Megalopyge opercularis (Southern flannel moth).